The following is a 344-amino-acid chain: Centromere protein L (344 aa).

Positions 1–32 are disordered; that stretch reads MAGGRPAGSAIEMEGAMRTLPSSGRPSGTGWQ. A compositionally biased stretch (polar residues) spans 20–32; it reads LPSSGRPSGTGWQ.

The protein belongs to the CENP-L/IML3 family. As to quaternary structure, component of the CENPA-HI complex, at least composed of CENPH, CENPI, CENPK, CENPL, CENPM, CENPO and CENPP.

It is found in the nucleus. It localises to the chromosome. Its subcellular location is the centromere. In terms of biological role, component of the CENPA-HI complex, a centromeric complex involved in assembly of kinetochore proteins, mitotic progression and chromosome segregation. The chain is Centromere protein L (CENPL) from Gallus gallus (Chicken).